We begin with the raw amino-acid sequence, 237 residues long: Uridylate kinase (237 aa).

ATP is bound at residue 10 to 13 (KLSG). Gly52 provides a ligand contact to UMP. Residues Gly53 and Arg57 each contribute to the ATP site. UMP-binding positions include Asp72 and 133–140 (TGNPFFTT). Residues Thr160, Tyr166, and Asp169 each coordinate ATP.

It belongs to the UMP kinase family. Homohexamer.

Its subcellular location is the cytoplasm. It catalyses the reaction UMP + ATP = UDP + ADP. Its pathway is pyrimidine metabolism; CTP biosynthesis via de novo pathway; UDP from UMP (UMPK route): step 1/1. Inhibited by UTP. Its function is as follows. Catalyzes the reversible phosphorylation of UMP to UDP. In Thiobacillus denitrificans (strain ATCC 25259 / T1), this protein is Uridylate kinase.